The following is a 107-amino-acid chain: Apolipoprotein E (107 aa).

5 repeat units span residues 11-32, 33-54, 55-76, 77-98, and 99-107. A 5 X 22 AA approximate tandem repeats region spans residues 11-107; it reads ALMDETMKEL…LRDVDDLQKR (97 aa). Met-74 is subject to Methionine sulfoxide. Ser-78 is modified (phosphoserine). The interval 89–99 is LDL and other lipoprotein receptors binding; it reads HLRKLRKRLLR. 93-96 is a heparin binding site; sequence LRKR.

This sequence belongs to the apolipoprotein A1/A4/E family. Homotetramer. May interact with ABCA1; functionally associated with ABCA1 in the biogenesis of HDLs. May interact with APP/A4 amyloid-beta peptide; the interaction is extremely stable in vitro but its physiological significance is unclear. May interact with MAPT. May interact with MAP2. In the cerebrospinal fluid, interacts with secreted SORL1. Interacts with PMEL; this allows the loading of PMEL luminal fragment on ILVs to induce fibril nucleation. APOE exists as multiple glycosylated and sialylated glycoforms within cells and in plasma. The extent of glycosylation and sialylation are tissue and context specific. Post-translationally, glycated in plasma VLDL. In terms of processing, phosphorylated by FAM20C in the extracellular medium.

The protein localises to the secreted. Its subcellular location is the extracellular space. The protein resides in the extracellular matrix. It localises to the extracellular vesicle. It is found in the endosome. The protein localises to the multivesicular body. In terms of biological role, APOE is an apolipoprotein, a protein associating with lipid particles, that mainly functions in lipoprotein-mediated lipid transport between organs via the plasma and interstitial fluids. APOE is a core component of plasma lipoproteins and is involved in their production, conversion and clearance. Apolipoproteins are amphipathic molecules that interact both with lipids of the lipoprotein particle core and the aqueous environment of the plasma. As such, APOE associates with chylomicrons, chylomicron remnants, very low density lipoproteins (VLDL) and intermediate density lipoproteins (IDL) but shows a preferential binding to high-density lipoproteins (HDL). It also binds a wide range of cellular receptors including the LDL receptor/LDLR, the LDL receptor-related proteins LRP1, LRP2 and LRP8 and the very low-density lipoprotein receptor/VLDLR that mediate the cellular uptake of the APOE-containing lipoprotein particles. Finally, APOE also has a heparin-binding activity and binds heparan-sulfate proteoglycans on the surface of cells, a property that supports the capture and the receptor-mediated uptake of APOE-containing lipoproteins by cells. A main function of APOE is to mediate lipoprotein clearance through the uptake of chylomicrons, VLDLs, and HDLs by hepatocytes. APOE is also involved in the biosynthesis by the liver of VLDLs as well as their uptake by peripheral tissues ensuring the delivery of triglycerides and energy storage in muscle, heart and adipose tissues. By participating in the lipoprotein-mediated distribution of lipids among tissues, APOE plays a critical role in plasma and tissues lipid homeostasis. APOE is also involved in two steps of reverse cholesterol transport, the HDLs-mediated transport of cholesterol from peripheral tissues to the liver, and thereby plays an important role in cholesterol homeostasis. First, it is functionally associated with ABCA1 in the biogenesis of HDLs in tissues. Second, it is enriched in circulating HDLs and mediates their uptake by hepatocytes. APOE also plays an important role in lipid transport in the central nervous system, regulating neuron survival and sprouting. The chain is Apolipoprotein E (APOE) from Saimiri sciureus (Common squirrel monkey).